Consider the following 193-residue polypeptide: CASP-like protein 1F3 (193 aa).

The disordered stretch occupies residues 1–25; the sequence is MASPQNTSQKRFFQANSPGGMPTAS. Residues 1–35 are Cytoplasmic-facing; it reads MASPQNTSQKRFFQANSPGGMPTASQSQRSRILAQ. A helical membrane pass occupies residues 36-56; the sequence is ITLRFLAIAFTVTAIPVMITA. The Extracellular segment spans residues 57-78; that stretch reads KEPVSLLGLAITPSYKQSSAMK. A helical transmembrane segment spans residues 79-99; the sequence is FLLGVNATVFAFTALSMLFVW. The Cytoplasmic portion of the chain corresponds to 100-118; the sequence is PLRRSGSKPINYFFLHLHD. A helical transmembrane segment spans residues 119 to 139; sequence MVMTLLLISGCAAATAVGYLS. Topologically, residues 140–161 are extracellular; sequence QYGQPETYWSPICDIVKKFCHQ. A helical membrane pass occupies residues 162–182; it reads MLISTVLSYLAFFCYLALNIL. Residues 183 to 193 lie on the Cytoplasmic side of the membrane; that stretch reads SVHKLMSRATE.

This sequence belongs to the Casparian strip membrane proteins (CASP) family. As to quaternary structure, homodimer and heterodimers.

Its subcellular location is the cell membrane. This Populus trichocarpa (Western balsam poplar) protein is CASP-like protein 1F3.